Reading from the N-terminus, the 313-residue chain is Olfactory receptor 2B6 (313 aa).

At 1-25 the chain is on the extracellular side; it reads MNWVNDSIIQEFILLGFSDRPWLEF. The N-linked (GlcNAc...) asparagine glycan is linked to asparagine 5. A helical transmembrane segment spans residues 26–49; the sequence is PLLVVFLISYTVTIFGNLTIILVS. Residues 50–57 lie on the Cytoplasmic side of the membrane; sequence RLDTKLHT. A helical membrane pass occupies residues 58 to 79; it reads PMYFFLTNLSLLDLCYTTCTVP. Residues 80–100 are Extracellular-facing; the sequence is QMLVNLCSIRKVISYRGCVAQ. Cysteines 97 and 189 form a disulfide. The helical transmembrane segment at 101–120 threads the bilayer; it reads LFIFLALGATEYLLLAVMSF. At 121–139 the chain is on the cytoplasmic side; that stretch reads DRFVAICRPLHYSVIMHQR. The helical transmembrane segment at 140–158 threads the bilayer; the sequence is LCLQLAAASWVTGFSNSVW. Residues 159–195 lie on the Extracellular side of the membrane; the sequence is LSTLTLQLPLCDPYVIDHFLCEVPALLKLSCVETTAN. The chain crosses the membrane as a helical span at residues 196–219; the sequence is EAELFLVSELFHLIPLTLILISYA. Residues 220–236 lie on the Cytoplasmic side of the membrane; sequence FIVRAVLRIQSAEGRQK. A helical transmembrane segment spans residues 237–259; it reads AFGTCGSHLIVVSLFYSTAVSVY. Residues 260 to 272 are Extracellular-facing; that stretch reads LQPPSPSSKDQGK. Residues 273–292 traverse the membrane as a helical segment; it reads MVSLFYGIIAPMLNPLIYTL. At 293–313 the chain is on the cytoplasmic side; sequence RNKEVKEGFKRLVARVFLIKK.

It belongs to the G-protein coupled receptor 1 family.

It is found in the cell membrane. Odorant receptor. The protein is Olfactory receptor 2B6 of Homo sapiens (Human).